The chain runs to 706 residues: Serine/threonine-protein kinase BUR1 (706 aa).

The Protein kinase domain maps to Y38–F339. ATP contacts are provided by residues I44–V52 and K67. The active-site Proton acceptor is the D168. Composition is skewed to basic and acidic residues over residues L360–R523, D545–R570, and D594–D623. A disordered region spans residues L360–R706. Positions G625 to P648 are enriched in pro residues. The span at W659–R706 shows a compositional bias: basic and acidic residues.

It belongs to the protein kinase superfamily. CMGC Ser/Thr protein kinase family. CDC2/CDKX subfamily.

It localises to the nucleus. The enzyme catalyses L-seryl-[protein] + ATP = O-phospho-L-seryl-[protein] + ADP + H(+). The catalysed reaction is L-threonyl-[protein] + ATP = O-phospho-L-threonyl-[protein] + ADP + H(+). It catalyses the reaction [DNA-directed RNA polymerase] + ATP = phospho-[DNA-directed RNA polymerase] + ADP + H(+). Functionally, serine/threonine-protein kinase involved in transcription regulation. Phosphorylates the UBC2/RAD6 ubiquitin-conjugating enzyme (E2), leading to monoubiquitination of histone H2B and the silencing of telomeric-associated genes. Also required for histone H3 methylation. Necessary for the recovery from pheromone-induced growth arrest in the cell cycle G1 phase. This chain is Serine/threonine-protein kinase BUR1 (BUR1), found in Yarrowia lipolytica (strain CLIB 122 / E 150) (Yeast).